Reading from the N-terminus, the 542-residue chain is CTP synthase (542 aa).

An amidoligase domain region spans residues 1 to 265 (MTRYVFITGG…DREVLALFGI (265 aa)). S13 lines the CTP pocket. Position 13 (S13) interacts with UTP. Residues 14 to 19 (SLGKGL) and D71 each bind ATP. Mg(2+) is bound by residues D71 and E139. CTP is bound by residues 146 to 148 (DIE), 186 to 191 (KTKPTQ), and K222. UTP contacts are provided by residues 186-191 (KTKPTQ) and K222. 238–240 (RDV) is an ATP binding site. Positions 291–541 (SIAIVGKYTG…IGAAVVQSRL (251 aa)) constitute a Glutamine amidotransferase type-1 domain. G353 provides a ligand contact to L-glutamine. The active-site Nucleophile; for glutamine hydrolysis is the C380. L-glutamine contacts are provided by residues 381–384 (FGMQ), E404, and R469. Active-site residues include H514 and E516.

This sequence belongs to the CTP synthase family. As to quaternary structure, homotetramer.

It carries out the reaction UTP + L-glutamine + ATP + H2O = CTP + L-glutamate + ADP + phosphate + 2 H(+). The enzyme catalyses L-glutamine + H2O = L-glutamate + NH4(+). The catalysed reaction is UTP + NH4(+) + ATP = CTP + ADP + phosphate + 2 H(+). It functions in the pathway pyrimidine metabolism; CTP biosynthesis via de novo pathway; CTP from UDP: step 2/2. With respect to regulation, allosterically activated by GTP, when glutamine is the substrate; GTP has no effect on the reaction when ammonia is the substrate. The allosteric effector GTP functions by stabilizing the protein conformation that binds the tetrahedral intermediate(s) formed during glutamine hydrolysis. Inhibited by the product CTP, via allosteric rather than competitive inhibition. Its function is as follows. Catalyzes the ATP-dependent amination of UTP to CTP with either L-glutamine or ammonia as the source of nitrogen. Regulates intracellular CTP levels through interactions with the four ribonucleotide triphosphates. This is CTP synthase from Methylobacterium nodulans (strain LMG 21967 / CNCM I-2342 / ORS 2060).